A 197-amino-acid chain; its full sequence is uncharacterized protein (197 aa).

This is an uncharacterized protein from Acanthamoeba polyphaga (Amoeba).